We begin with the raw amino-acid sequence, 410 residues long: Cytochrome P450(BM-1) (410 aa).

Heme is bound at residue cysteine 356.

Belongs to the cytochrome P450 family. Heme is required as a cofactor.

It is found in the cytoplasm. In terms of biological role, cytochromes P450 are a group of heme-thiolate monooxygenases. They oxidize a variety of structurally unrelated compounds, including steroids, fatty acids, and xenobiotics. The polypeptide is Cytochrome P450(BM-1) (cyp106) (Priestia megaterium (strain ATCC 14581 / DSM 32 / CCUG 1817 / JCM 2506 / NBRC 15308 / NCIMB 9376 / NCTC 10342 / NRRL B-14308 / VKM B-512 / Ford 19) (Bacillus megaterium)).